The sequence spans 305 residues: 4-diphosphocytidyl-2-C-methyl-D-erythritol kinase (305 aa).

Residue lysine 18 is part of the active site. 103–113 is a binding site for ATP; it reads PYGAGLGGGSS. Residue aspartate 145 is part of the active site.

This sequence belongs to the GHMP kinase family. IspE subfamily.

It catalyses the reaction 4-CDP-2-C-methyl-D-erythritol + ATP = 4-CDP-2-C-methyl-D-erythritol 2-phosphate + ADP + H(+). It functions in the pathway isoprenoid biosynthesis; isopentenyl diphosphate biosynthesis via DXP pathway; isopentenyl diphosphate from 1-deoxy-D-xylulose 5-phosphate: step 3/6. Functionally, catalyzes the phosphorylation of the position 2 hydroxy group of 4-diphosphocytidyl-2C-methyl-D-erythritol. This is 4-diphosphocytidyl-2-C-methyl-D-erythritol kinase from Lawsonia intracellularis (strain PHE/MN1-00).